A 248-amino-acid polypeptide reads, in one-letter code: Large ribosomal subunit protein uL30B (248 aa).

The tract at residues 1 to 45 (MSQKKQKIQVEQKVPENVAKKTQRDSKLRDAVAKRRTERLAANKT) is disordered. The segment covering 8-41 (IQVEQKVPENVAKKTQRDSKLRDAVAKRRTERLA) has biased composition (basic and acidic residues).

This sequence belongs to the universal ribosomal protein uL30 family.

Functionally, binds to G-rich structures in 28S rRNA and in mRNAs. Plays a regulatory role in the translation apparatus; inhibits cell-free translation of mRNAs. This Paramecium tetraurelia protein is Large ribosomal subunit protein uL30B (Rpl7-2).